The primary structure comprises 420 residues: MLAEIISIGDELLIGQVVNTNATFISKCLDEIGISTRRILTVSDKPDCIERQLADSLSHADLVLTTGGLGPTHDDITKKIIADFFGLGYEFNEEAFERCKALFARRGREMPASNRSQGEVIEGSVVLQNTRGTAPGMILQNLPNYEGKFVVIMPGVPYEMQEMMRVSVVPFFQPHSKHFIKHTSLMTAGIGESTLAEQIGEVKAFLPDGSTLAFLPHSVGVRLRVSSKGENFQAVQKEHAQVVDALKARIGGYLYATTDMPLEEHIGELLKSRGLSIATAESCTGGLIANRLTNIPGSSAYFYQGFVTYSNEAKIKALGVREETLAAHGAVSEETAQEMAAGCLEKTGSDIAISTTGIAGPGGGTEIKPVGMVCIGVATSAKLGSRSFAKTMIFWADRLLNKERFSEAALNLVRELLNAS.

The protein belongs to the CinA family.

This chain is CinA-like protein, found in Chloroherpeton thalassium (strain ATCC 35110 / GB-78).